The primary structure comprises 331 residues: Phenylalanine--tRNA ligase alpha subunit (331 aa).

Residue E252 coordinates Mg(2+).

The protein belongs to the class-II aminoacyl-tRNA synthetase family. Phe-tRNA synthetase alpha subunit type 1 subfamily. As to quaternary structure, tetramer of two alpha and two beta subunits. The cofactor is Mg(2+).

It is found in the cytoplasm. It carries out the reaction tRNA(Phe) + L-phenylalanine + ATP = L-phenylalanyl-tRNA(Phe) + AMP + diphosphate + H(+). In Xanthomonas oryzae pv. oryzae (strain MAFF 311018), this protein is Phenylalanine--tRNA ligase alpha subunit.